A 429-amino-acid chain; its full sequence is BURP domain-containing protein 3 (429 aa).

The first 21 residues, 1 to 21, serve as a signal peptide directing secretion; that stretch reads MDRLLACLLGFLLIASVGSHA. The interval 59 to 81 is disordered; that stretch reads GGGVHVDAGHGKPGGTTVDVGKG. Residues 213 to 428 enclose the BURP domain; sequence FFLEKDLHPG…PQDHVVWTRS (216 aa).

In terms of tissue distribution, expressed in stems, leaves, shoot, panicles and stamen.

This chain is BURP domain-containing protein 3 (BURP3), found in Oryza sativa subsp. japonica (Rice).